The sequence spans 486 residues: Ribosomal RNA small subunit methyltransferase F (486 aa).

Residues 124–130 (ASAPGSK), glutamate 148, aspartate 175, and aspartate 193 contribute to the S-adenosyl-L-methionine site. Cysteine 246 functions as the Nucleophile in the catalytic mechanism.

Belongs to the class I-like SAM-binding methyltransferase superfamily. RsmB/NOP family.

Its subcellular location is the cytoplasm. It carries out the reaction cytidine(1407) in 16S rRNA + S-adenosyl-L-methionine = 5-methylcytidine(1407) in 16S rRNA + S-adenosyl-L-homocysteine + H(+). Its function is as follows. Specifically methylates the cytosine at position 1407 (m5C1407) of 16S rRNA. This chain is Ribosomal RNA small subunit methyltransferase F, found in Shewanella baltica (strain OS155 / ATCC BAA-1091).